Reading from the N-terminus, the 836-residue chain is DNA gyrase subunit A (836 aa).

The Topo IIA-type catalytic domain occupies 46–510 (LPDARDGLKP…ISEEIDDESL (465 aa)). Tyr134 acts as the O-(5'-phospho-DNA)-tyrosine intermediate in catalysis. The GyrA-box motif lies at 537 to 543 (QHRGGVG).

The protein belongs to the type II topoisomerase GyrA/ParC subunit family. As to quaternary structure, heterotetramer, composed of two GyrA and two GyrB chains. In the heterotetramer, GyrA contains the active site tyrosine that forms a transient covalent intermediate with DNA, while GyrB binds cofactors and catalyzes ATP hydrolysis.

It is found in the cytoplasm. It carries out the reaction ATP-dependent breakage, passage and rejoining of double-stranded DNA.. In terms of biological role, a type II topoisomerase that negatively supercoils closed circular double-stranded (ds) DNA in an ATP-dependent manner to modulate DNA topology and maintain chromosomes in an underwound state. Negative supercoiling favors strand separation, and DNA replication, transcription, recombination and repair, all of which involve strand separation. Also able to catalyze the interconversion of other topological isomers of dsDNA rings, including catenanes and knotted rings. Type II topoisomerases break and join 2 DNA strands simultaneously in an ATP-dependent manner. The chain is DNA gyrase subunit A from Mycoplasma genitalium (strain ATCC 33530 / DSM 19775 / NCTC 10195 / G37) (Mycoplasmoides genitalium).